The chain runs to 476 residues: Transcription factor Sox-9-B (476 aa).

Disordered regions lie at residues 1–67 (MNLL…TEDE), 157–197 (EAER…EQTH), and 209–274 (ADSP…FRDV). A compositionally biased stretch (low complexity) spans 30 to 41 (SAGSPCPSGSGS). A compositionally biased stretch (polar residues) spans 42–52 (DTENTRPQENT). 2 stretches are compositionally biased toward basic and acidic residues: residues 56–67 (GDQEMKKETEDE) and 157–174 (EAER…DYKY). Residue lysine 61 forms a Glycyl lysine isopeptide (Lys-Gly) (interchain with G-Cter in SUMO) linkage. The segment at residues 105–173 (VKRPMNAFMV…QHKKDHPDYK (69 aa)) is a DNA-binding region (HMG box). The span at 211–220 (SPHSTSSMSE) shows a compositional bias: polar residues. 2 consecutive short sequence motifs (9aaTAD) follow at residues 276-285 (IGELSSEVIS) and 291-299 (DVNEFDQYL). Residues 318 to 383 (YGISSTPSAT…SDQQQQHSPQ (66 aa)) are disordered. Residues 319–344 (GISSTPSATTGAGSAWMSKQQQQPQQ) are compositionally biased toward low complexity. The span at 345 to 360 (HSLSTINSEQSQSQQR) shows a compositional bias: polar residues. A Glycyl lysine isopeptide (Lys-Gly) (interchain with G-Cter in SUMO) cross-link involves residue lysine 364. Residues 369–383 (SPSHYSDQQQQHSPQ) are compositionally biased toward low complexity. The short motif at 427 to 435 (SGLYSNFTY) is the 9aaTAD 3 element. A disordered region spans residues 443 to 476 (MYTPIADTTGVPSIPQTHSPQHWEQPVYTQLTRP). The span at 452–476 (GVPSIPQTHSPQHWEQPVYTQLTRP) shows a compositional bias: polar residues.

As to quaternary structure, interacts with the sumoylation factors ube2i/ubc9 and sumo1. In terms of processing, sumoylated. Lys-364 is the major site of sumoylation, although sumoylation at Lys-61 also occurs. Sumoylation plays a key role in regulating formation of the neural crest and otic placode.

It is found in the nucleus. Its subcellular location is the cytoplasm. Its function is as follows. Transcription factor that plays a key role in chondrocytes differentiation and skeletal development. Specifically binds the 5'-ACAAAG-3' DNA motif present in enhancers and super-enhancers and promotes expression of genes important for chondrogenesis, including COL2A1. Plays a central role in successive steps of chondrocyte differentiation. Absolutely required for precartilaginous condensation, the first step in chondrogenesis during which skeletal progenitors differentiate into prechondrocytes. Together with SOX5 and SOX6, required for overt chondrogenesis when condensed prechondrocytes differentiate into early stage chondrocytes, the second step in chondrogenesis. Later, required to direct hypertrophic maturation and block osteoblast differentiation of growth plate chondrocytes: maintains chondrocyte columnar proliferation, delays prehypertrophy and then prevents osteoblastic differentiation of chondrocytes. Also required for chondrocyte hypertrophy, both indirectly, by keeping the lineage fate of chondrocytes, and directly, by remaining present in upper hypertrophic cells. Low lipid levels are the main nutritional determinant for chondrogenic commitment of skeletal progenitor cells: when lipids levels are low, FOXO transcription factors promote expression of SOX9, which induces chondrogenic commitment and suppresses fatty acid oxidation. In addition to cartilage development, also acts as a regulator of proliferation and differentiation in epithelial stem/progenitor cells. This Xenopus laevis (African clawed frog) protein is Transcription factor Sox-9-B (sox9-b).